A 74-amino-acid polypeptide reads, in one-letter code: MKKERTESLVAQALKNIGNDRYMLDNLVFARVKQLNAGAKTLVNMDPKRHKLVDIAIREIAEGKIDIDRIDERN.

It belongs to the RNA polymerase subunit omega family. The RNAP catalytic core consists of 2 alpha, 1 beta, 1 beta' and 1 omega subunit. When a sigma factor is associated with the core the holoenzyme is formed, which can initiate transcription.

It carries out the reaction RNA(n) + a ribonucleoside 5'-triphosphate = RNA(n+1) + diphosphate. Promotes RNA polymerase assembly. Latches the N- and C-terminal regions of the beta' subunit thereby facilitating its interaction with the beta and alpha subunits. The sequence is that of DNA-directed RNA polymerase subunit omega from Helicobacter acinonychis (strain Sheeba).